An 862-amino-acid chain; its full sequence is Taxadiene synthase (862 aa).

Residues Asp-613, Asp-617, Asn-757, Thr-761, and Glu-765 each contribute to the Mg(2+) site. Positions 613 to 617 match the DDXXD motif motif; it reads DDMAD.

This sequence belongs to the terpene synthase family. Mg(2+) is required as a cofactor.

It carries out the reaction (2E,6E,10E)-geranylgeranyl diphosphate = taxa-4(5),11(12)-diene + diphosphate. It participates in alkaloid biosynthesis; taxol biosynthesis; taxa-4(20),11-dien-5alpha-ol from geranylgeranyl diphosphate: step 1/2. Functionally, catalyzes the cyclization of the ubiquitous isoprenoid intermediate geranylgeranyl diphosphate to taxa-4,11-diene, the parent olefin with a taxane skeleton. In Taxus baccata (English yew), this protein is Taxadiene synthase (TDC1).